We begin with the raw amino-acid sequence, 431 residues long: Intraflagellar transport protein 38 (431 aa).

Positions 177–218 form a coiled coil; it reads SAAVQQRIKNLAAECNTLQEEVTTNKREKAKLEEQITQKKQS. Residues 346-431 are disordered; that stretch reads INTNAEIPDD…EELDPDNIEF (86 aa). Residues 352 to 370 show a composition bias toward acidic residues; it reads IPDDESYSYSYEEEEEEEQ. A compositionally biased stretch (basic and acidic residues) spans 384 to 405; the sequence is PETHSNGEKHRGLDELSHKSNE. A compositionally biased stretch (acidic residues) spans 420–431; it reads GGEELDPDNIEF.

Belongs to the CLUAP1 family.

Its subcellular location is the cell projection. The protein resides in the cilium. The protein localises to the flagellum. It is found in the cytoplasm. It localises to the cytoskeleton. Its subcellular location is the flagellum axoneme. The protein resides in the flagellum basal body. Functionally, component of the intraflagellar transport complex B (IFT-B) involved in flagellar assembly. In Giardia intestinalis (strain ATCC 50803 / WB clone C6) (Giardia lamblia), this protein is Intraflagellar transport protein 38.